The chain runs to 153 residues: Insulin-like growth factor 1 (153 aa).

The tract at residues Gly-49–Thr-77 is b. 3 disulfide bridges follow: Cys-54–Cys-96, Cys-66–Cys-109, and Cys-95–Cys-100. Residues Gly-78–Thr-89 are c. The a stretch occupies residues Gly-90–Ala-110. The segment at Pro-111–Ala-118 is d. The propeptide at Arg-119–Met-153 is e peptide. The segment at Ser-120–Met-153 is disordered. The segment covering Arg-125–Leu-138 has biased composition (basic and acidic residues). The segment covering Ser-142 to Met-153 has biased composition (polar residues).

Belongs to the insulin family. In terms of assembly, forms a ternary complex with IGFR1 and ITGAV:ITGB3. Forms a ternary complex with IGFR1 and ITGA6:ITGB4. Forms a ternary complex with IGFBP3 and ALS.

The protein resides in the secreted. Functionally, the insulin-like growth factors, isolated from plasma, are structurally and functionally related to insulin but have a much higher growth-promoting activity. May be a physiological regulator of [1-14C]-2-deoxy-D-glucose (2DG) transport and glycogen synthesis in osteoblasts. Stimulates glucose transport in bone-derived osteoblastic (PyMS) cells and is effective at much lower concentrations than insulin, not only regarding glycogen and DNA synthesis but also with regard to enhancing glucose uptake. May play a role in synapse maturation. Ca(2+)-dependent exocytosis of IGF1 is required for sensory perception of smell in the olfactory bulb. Acts as a ligand for IGF1R. Binds to the alpha subunit of IGF1R, leading to the activation of the intrinsic tyrosine kinase activity which autophosphorylates tyrosine residues in the beta subunit thus initiating a cascade of down-stream signaling events leading to activation of the PI3K-AKT/PKB and the Ras-MAPK pathways. Binds to integrins ITGAV:ITGB3 and ITGA6:ITGB4. Its binding to integrins and subsequent ternary complex formation with integrins and IGFR1 are essential for IGF1 signaling. Induces the phosphorylation and activation of IGFR1, MAPK3/ERK1, MAPK1/ERK2 and AKT1. As part of the MAPK/ERK signaling pathway, acts as a negative regulator of apoptosis in cardiomyocytes via promotion of STUB1/CHIP-mediated ubiquitination and degradation of ICER-type isoforms of CREM. The chain is Insulin-like growth factor 1 from Rhinopithecus roxellana (Golden snub-nosed monkey).